Reading from the N-terminus, the 928-residue chain is Eukaryotic translation initiation factor 3 subunit C (928 aa).

2 disordered regions span residues 1–37 (MSRFFANGSDSESESSEEEVPTQFNNKAQNFQFSDDE) and 157–286 (FREA…EDGE). Residues 11–20 (SESESSEEEV) show a composition bias toward acidic residues. Residues 22 to 33 (TQFNNKAQNFQF) show a composition bias toward polar residues. Residues S34, S165, S177, and S186 each carry the phosphoserine modification. Positions 162–171 (DQESDVDEGE) are enriched in acidic residues. Basic and acidic residues predominate over residues 172–184 (GDVHDSDADRAGD). A compositionally biased stretch (acidic residues) spans 215–240 (DDDDSEDSIDWDPDTESETESSEDEN). A compositionally biased stretch (basic and acidic residues) spans 245 to 264 (MRERFLKRTTEKEDKDDDKR). Residues 265–277 (KDKRKEQKHKVRK) are compositionally biased toward basic residues. The PCI domain occupies 656–832 (FHMHINLELL…ETVVMHRSEP (177 aa)). Residues 864–928 (FFQRGNMGNR…QQQVHTIDEE (65 aa)) form a disordered region. Positions 898–909 (QRNRNQRGHHKQ) are enriched in basic residues. Residues 910 to 921 (NQQQNQQQQQQQ) are compositionally biased toward low complexity.

This sequence belongs to the eIF-3 subunit C family. As to quaternary structure, component of the eukaryotic translation initiation factor 3 (eIF-3) complex. The eIF-3 complex interacts with pix.

It is found in the cytoplasm. Functionally, component of the eukaryotic translation initiation factor 3 (eIF-3) complex, which is involved in protein synthesis of a specialized repertoire of mRNAs and, together with other initiation factors, stimulates binding of mRNA and methionyl-tRNAi to the 40S ribosome. The eIF-3 complex specifically targets and initiates translation of a subset of mRNAs involved in cell proliferation. In Drosophila grimshawi (Hawaiian fruit fly), this protein is Eukaryotic translation initiation factor 3 subunit C.